We begin with the raw amino-acid sequence, 876 residues long: Alanine--tRNA ligase (876 aa).

Residues His-564, His-568, Cys-666, and His-670 each contribute to the Zn(2+) site.

The protein belongs to the class-II aminoacyl-tRNA synthetase family. In terms of assembly, homotetramer. Zn(2+) serves as cofactor.

Its subcellular location is the cytoplasm. The catalysed reaction is tRNA(Ala) + L-alanine + ATP = L-alanyl-tRNA(Ala) + AMP + diphosphate. In terms of biological role, catalyzes the attachment of alanine to tRNA(Ala) in a two-step reaction: alanine is first activated by ATP to form Ala-AMP and then transferred to the acceptor end of tRNA(Ala). Also edits incorrectly charged Ser-tRNA(Ala) and Gly-tRNA(Ala) via its editing domain. In Salmonella paratyphi B (strain ATCC BAA-1250 / SPB7), this protein is Alanine--tRNA ligase.